We begin with the raw amino-acid sequence, 267 residues long: MSRLTSTFQVLRHANRKALIPFITAGDPEPGFTVPVMHAMVEAGADVIELGVPFSDPMADGPVIQKASERALVHHMSLGKTLDLVAEFRRADRTTPIVLMGYLNPVECMGYQRFVDRAKDAGVDGVLTVDMPPEEAGEFVPMLHRAGLDPIFLLAPNSSDARVQRMAALGRGYLYYVSLKGVTGASHLDLAEVESRIAHIRSLTDLPIGVGFGVKNAETAAAIGRFADAVVVGSALVEKIAAAQDRPEQARKDIVDLLAVMRRALDA.

Catalysis depends on proton acceptor residues E49 and D60.

The protein belongs to the TrpA family. As to quaternary structure, tetramer of two alpha and two beta chains.

The catalysed reaction is (1S,2R)-1-C-(indol-3-yl)glycerol 3-phosphate + L-serine = D-glyceraldehyde 3-phosphate + L-tryptophan + H2O. It functions in the pathway amino-acid biosynthesis; L-tryptophan biosynthesis; L-tryptophan from chorismate: step 5/5. Functionally, the alpha subunit is responsible for the aldol cleavage of indoleglycerol phosphate to indole and glyceraldehyde 3-phosphate. In Methylococcus capsulatus (strain ATCC 33009 / NCIMB 11132 / Bath), this protein is Tryptophan synthase alpha chain.